The chain runs to 274 residues: Acyl-coenzyme A diphosphatase YFT2 (274 aa).

Over 1–11 (MIRQLNYWSRK) the chain is Cytoplasmic. A helical membrane pass occupies residues 12–32 (AYLIYPFQVFVGALLSIVVSS). Over 33–60 (ETLNHQKETCALLKSSNIFNVIFAYKAN) the chain is Lumenal. A helical transmembrane segment spans residues 61–81 (QLWPFLFFSLAFLQIYFHYLA). The Cytoplasmic segment spans residues 82-124 (RMDILPLPISSTETSSSYLTYTNHWPLLKNRIISIMITQYACK). The chain crosses the membrane as a helical span at residues 125–145 (FVLKYLLLFLNFQFIDHVFIW). Residues 146–170 (TGGECSSGSKTTSAEKCRLENGKWD) are Lumenal-facing. Residues 171–191 (GGFDISGHFCFLVSISMILWM) form a helical membrane-spanning segment. Histidine 178 is an active-site residue. Residues 192–215 (ELHLFSRFVQAEDMFWVVNKWVRA) lie on the Cytoplasmic side of the membrane. The helical transmembrane segment at 216 to 236 (CLAIVCAVLVIWICILWVTAI) threads the bilayer. Residues 237-247 (YYHTILEKVLG) are Lumenal-facing. Histidine 239 is a catalytic residue. Residues 248 to 268 (CLMGFICPVFIYHILPKIGIL) form a helical membrane-spanning segment. The Cytoplasmic segment spans residues 269–274 (HNYLYL).

The protein belongs to the FIT family. Yeast FIT2A/YFT2 subfamily.

The protein localises to the endoplasmic reticulum membrane. It is found in the vacuole. It carries out the reaction an acyl-CoA + H2O = an acyl-4'-phosphopantetheine + adenosine 3',5'-bisphosphate + 2 H(+). It catalyses the reaction (9Z)-octadecenoyl-CoA + H2O = S-(9Z-octadecenoyl)-4'-phosphopantetheine + adenosine 3',5'-bisphosphate + 2 H(+). The catalysed reaction is (5Z,8Z,11Z,14Z)-eicosatetraenoyl-CoA + H2O = S-(5Z,8Z,11Z,14Z-eicosatetraenoyl)-4'-phosphopantetheine + adenosine 3',5'-bisphosphate + 2 H(+). The enzyme catalyses hexadecanoyl-CoA + H2O = S-hexadecanoyl-4'-phosphopantetheine + adenosine 3',5'-bisphosphate + 2 H(+). Its function is as follows. Fatty acyl-coenzyme A (CoA) diphosphatase that hydrolyzes fatty acyl-CoA to yield acyl-4'-phosphopantetheine and adenosine 3',5'-bisphosphate. Preferentially hydrolyzes unsaturated long-chain acyl-CoA substrates in the endoplasmic reticulum (ER) lumen. This catalytic activity is required for maintaining ER structure and for lipid droplets (LDs) biogenesis, which are lipid storage organelles involved in maintaining lipid and energy homeostasis. May directly bind to diacylglycerol (DAGs) and triacylglycerol, which is also important for LD biogenesis. May support directional budding of nacent LDs from the ER into the cytosol by reducing DAG levels at sites of LD formation. May play a role in the regulation of cell morphology and cytoskeletal organization. Involved in phospholipid biosynthesis. The sequence is that of Acyl-coenzyme A diphosphatase YFT2 from Saccharomyces cerevisiae (strain ATCC 204508 / S288c) (Baker's yeast).